The chain runs to 460 residues: Chromosomal replication initiator protein DnaA (460 aa).

Positions 1–83 (MENIWLEAQT…EFHVADEKPE (83 aa)) are domain I, interacts with DnaA modulators. Residues 78–121 (ADEKPEAAPEEKPEKEGKPAREKEKDKDKEKEKDREKEKDKKEL) are compositionally biased toward basic and acidic residues. Positions 78-122 (ADEKPEAAPEEKPEKEGKPAREKEKDKDKEKEKDREKEKDKKELV) are disordered. The domain II stretch occupies residues 83 to 123 (EAAPEEKPEKEGKPAREKEKDKDKEKEKDREKEKDKKELVP). A domain III, AAA+ region region spans residues 124–340 (NLNPKYTFES…GMLIRLEAFA (217 aa)). G168, G170, K171, and T172 together coordinate ATP. The segment at 341–460 (SLTGQEITLS…VEDIRKKLFT (120 aa)) is domain IV, binds dsDNA.

It belongs to the DnaA family. In terms of assembly, oligomerizes as a right-handed, spiral filament on DNA at oriC.

It localises to the cytoplasm. Its function is as follows. Plays an essential role in the initiation and regulation of chromosomal replication. ATP-DnaA binds to the origin of replication (oriC) to initiate formation of the DNA replication initiation complex once per cell cycle. Binds the DnaA box (a 9 base pair repeat at the origin) and separates the double-stranded (ds)DNA. Forms a right-handed helical filament on oriC DNA; dsDNA binds to the exterior of the filament while single-stranded (ss)DNA is stabiized in the filament's interior. The ATP-DnaA-oriC complex binds and stabilizes one strand of the AT-rich DNA unwinding element (DUE), permitting loading of DNA polymerase. After initiation quickly degrades to an ADP-DnaA complex that is not apt for DNA replication. Binds acidic phospholipids. This chain is Chromosomal replication initiator protein DnaA, found in Geobacter sp. (strain M21).